A 330-amino-acid polypeptide reads, in one-letter code: Malate dehydrogenase (330 aa).

Residue 12–18 (GAAGQIG) participates in NAD(+) binding. 2 residues coordinate substrate: R93 and R99. Residues N106, Q113, and 130 to 132 (VGN) contribute to the NAD(+) site. Substrate-binding residues include N132 and R163. The active-site Proton acceptor is H188.

This sequence belongs to the LDH/MDH superfamily. MDH type 2 family.

It carries out the reaction (S)-malate + NAD(+) = oxaloacetate + NADH + H(+). Catalyzes the reversible oxidation of malate to oxaloacetate. The polypeptide is Malate dehydrogenase (Legionella pneumophila (strain Lens)).